The sequence spans 468 residues: UDP-N-acetylmuramate--L-alanine ligase (468 aa).

116 to 122 is a binding site for ATP; it reads GTHGKTT.

It belongs to the MurCDEF family.

Its subcellular location is the cytoplasm. The catalysed reaction is UDP-N-acetyl-alpha-D-muramate + L-alanine + ATP = UDP-N-acetyl-alpha-D-muramoyl-L-alanine + ADP + phosphate + H(+). The protein operates within cell wall biogenesis; peptidoglycan biosynthesis. Its function is as follows. Cell wall formation. This chain is UDP-N-acetylmuramate--L-alanine ligase, found in Fusobacterium nucleatum subsp. nucleatum (strain ATCC 25586 / DSM 15643 / BCRC 10681 / CIP 101130 / JCM 8532 / KCTC 2640 / LMG 13131 / VPI 4355).